Reading from the N-terminus, the 412-residue chain is UPF0754 membrane protein MAE_37850 (412 aa).

Transmembrane regions (helical) follow at residues 3 to 23 and 387 to 407; these read LPTLWTWILPPIAGAIIGYFT and IVNLGGILGLLVGLMQTIILI.

The protein belongs to the UPF0754 family.

The protein localises to the cell inner membrane. This is UPF0754 membrane protein MAE_37850 from Microcystis aeruginosa (strain NIES-843 / IAM M-2473).